The primary structure comprises 155 residues: CASP-like protein 5B2 (155 aa).

The Cytoplasmic portion of the chain corresponds to 1 to 18 (MWEVAWWRPGTWGGLAMR). The helical transmembrane segment at 19–39 (VGQVAFAGASIGVMASGAGFA) threads the bilayer. Asparagine 40 is a glycosylation site (N-linked (GlcNAc...) asparagine). Residues 40–43 (NYTA) are Extracellular-facing. Residues 44-64 (FCYLIASMGLQSLWSLGLACL) traverse the membrane as a helical segment. At 65-77 (DVYALTVKRDLNN) the chain is on the cytoplasmic side. The helical transmembrane segment at 78–98 (ALLVSLFVIGDWVTALLSFAA) threads the bilayer. Topologically, residues 99–128 (SCSAGGVMVLFKRDVLFCRRYPQLPCGRFE) are extracellular. The helical transmembrane segment at 129 to 149 (LAVALAFLSWALSATSAIIMF) threads the bilayer. Over 150–155 (CLLAAF) the chain is Cytoplasmic.

Belongs to the Casparian strip membrane proteins (CASP) family. As to quaternary structure, homodimer and heterodimers.

It is found in the cell membrane. This Oryza sativa subsp. indica (Rice) protein is CASP-like protein 5B2.